A 609-amino-acid chain; its full sequence is MTSATIPGLDTAPTNHQGLLSWVQEVAELTQPDRVVFADGSDEEFHRLSAQLVDAGTFTRLNDEKFPNSYLALSDPSDVARVESRTFICSEREIDAGPTNNWMNPSEMRTLMTDLYRGCMRGRTMYVVPFCMGPLGAEDPKLGVEITDSEYVVVSMKVMTRMGTAALEKMGQDGFFVKALHSVGAPLEDGQADVPWPCSDTKYITHFPETREIWSYGSGYGGNALLGKKCYSLRIASAMARDEGWLAEHMLILKLISPENKAYYIAAAFPSACGKTNLAMLQPTIPGWRAETLGDDIAWMRFGKDGRLYAVNPEFGFFGVAPGTNWKSNPNAMRTIAAGNTVFTNVALTDDGEVWWEGLEGDPQHLVDWKGNEWYFRETETTAAHPNSRYCTPMSQCPILAPEWDDPQGVPISAILFGGRRKTTVPLVTQARDWQHGVFIGATLGSEQTAAAEGKVGNVRRDPMAMLPFMGYNVGDYVQHWIDIGKNSDESKLPQVFFVNWFRRGEDHRFLWPGFGENSRVMKWIVDRIEHKAGGKTTPIGTVPTVEDLDLEGLDANPADVSEALAVNAQEWREELPLIEEWLQFIGEKLPTGIKDEFDALKERLRDAE.

Substrate contacts are provided by residues arginine 81 and 220-222; that span reads YGG. Residues lysine 229 and histidine 249 each coordinate Mn(2+). Serine 271 is a substrate binding site. 272–277 serves as a coordination point for GTP; it reads ACGKTN. Residue cysteine 273 is part of the active site. Position 296 (aspartate 296) interacts with Mn(2+). 387-389 contacts substrate; it reads NSR. GTP-binding positions include arginine 389, arginine 420, and 515 to 518; that span reads FGEN.

This sequence belongs to the phosphoenolpyruvate carboxykinase [GTP] family. As to quaternary structure, monomer. The cofactor is Mn(2+).

It is found in the cytoplasm. The catalysed reaction is oxaloacetate + GTP = phosphoenolpyruvate + GDP + CO2. It participates in carbohydrate biosynthesis; gluconeogenesis. Functionally, catalyzes the conversion of oxaloacetate (OAA) to phosphoenolpyruvate (PEP), the rate-limiting step in the metabolic pathway that produces glucose from lactate and other precursors derived from the citric acid cycle. The protein is Phosphoenolpyruvate carboxykinase [GTP] of Mycobacterium ulcerans (strain Agy99).